The sequence spans 857 residues: Alanine--tRNA ligase (857 aa).

Zn(2+) is bound by residues H556, H560, C658, and H662.

This sequence belongs to the class-II aminoacyl-tRNA synthetase family. It depends on Zn(2+) as a cofactor.

The protein resides in the cytoplasm. It catalyses the reaction tRNA(Ala) + L-alanine + ATP = L-alanyl-tRNA(Ala) + AMP + diphosphate. Catalyzes the attachment of alanine to tRNA(Ala) in a two-step reaction: alanine is first activated by ATP to form Ala-AMP and then transferred to the acceptor end of tRNA(Ala). Also edits incorrectly charged Ser-tRNA(Ala) and Gly-tRNA(Ala) via its editing domain. This is Alanine--tRNA ligase from Sulfurovum sp. (strain NBC37-1).